The primary structure comprises 256 residues: Ribonuclease HII (256 aa).

The RNase H type-2 domain maps to 72–256 (QYVAGIDEVG…TFRPVPDYVN (185 aa)). 3 residues coordinate a divalent metal cation: Asp78, Glu79, and Asp170.

The protein belongs to the RNase HII family. The cofactor is Mn(2+). Mg(2+) serves as cofactor.

It is found in the cytoplasm. The catalysed reaction is Endonucleolytic cleavage to 5'-phosphomonoester.. Its function is as follows. Endonuclease that specifically degrades the RNA of RNA-DNA hybrids. The protein is Ribonuclease HII of Limosilactobacillus fermentum (strain NBRC 3956 / LMG 18251) (Lactobacillus fermentum).